Reading from the N-terminus, the 738-residue chain is Protein Aster-B (738 aa).

The segment at 1–81 (MKGFKLSCTA…SGGKNSKKSQ (81 aa)) is disordered. Positions 8-19 (CTASNSNRSTPA) are enriched in polar residues. 2 positions are modified to phosphoserine: S28 and S30. The segment covering 41–51 (MVEKGSDHSSD) has biased composition (basic and acidic residues). Low complexity predominate over residues 59–70 (QGVQRSCSSQSG). Residues 96–163 (EDFRKLFKQL…KDICSMTKEK (68 aa)) enclose the GRAM domain. The tract at residues 254-299 (EENEVNDSSSKSSIETKPDASPQLPKKSITNSTLTSTGSSEAPVSF) is disordered. Positions 259 to 268 (NDSSSKSSIE) are enriched in polar residues. S274 bears the Phosphoserine mark. Residues 281-295 (SITNSTLTSTGSSEA) are compositionally biased toward polar residues. The region spanning 372–543 (SGRQYVNEVF…ELTKTESTYL (172 aa)) is the VASt domain. Y389 carries the post-translational modification Phosphotyrosine. S550 and S581 each carry phosphoserine. Phosphothreonine occurs at positions 584, 585, and 587. A helical membrane pass occupies residues 623 to 643 (LLLVISCVICFSLVLLVVLNM).

In terms of tissue distribution, highly expressed in the adrenal gland (at protein level) and brain. Also found in the kidney, testis and macrophages.

Its subcellular location is the endoplasmic reticulum membrane. The protein resides in the cell membrane. Functionally, cholesterol transporter that mediates non-vesicular transport of cholesterol from the plasma membrane (PM) to the endoplasmic reticulum (ER). Contains unique domains for binding cholesterol and the PM, thereby serving as a molecular bridge for the transfer of cholesterol from the PM to the ER. Plays a crucial role in cholesterol homeostasis in the adrenal gland and has the unique ability to localize to the PM based on the level of membrane cholesterol. In lipid-poor conditions localizes to the ER membrane and in response to excess cholesterol in the PM is recruited to the endoplasmic reticulum-plasma membrane contact sites (EPCS) which is mediated by the GRAM domain. At the EPCS, the sterol-binding VASt/ASTER domain binds to the cholesterol in the PM and facilitates its transfer from the PM to ER. In Mus musculus (Mouse), this protein is Protein Aster-B (Gramd1b).